A 787-amino-acid polypeptide reads, in one-letter code: Integrin beta-6 (787 aa).

The signal sequence occupies residues 1 to 21 (MGIELLCLFFLFLGRNDHVQG). One can recognise a PSI domain in the interval 22 to 71 (GCAMGGAETCEDCLLIGPQCAWCSQENFTHLSGVGERCDTPANLLAKGCQ). Topologically, residues 22–708 (GCAMGGAETC…KDCPKPPNIP (687 aa)) are extracellular. Disulfide bonds link cysteine 23–cysteine 41, cysteine 31–cysteine 454, cysteine 34–cysteine 59, cysteine 44–cysteine 70, cysteine 197–cysteine 204, cysteine 252–cysteine 293, cysteine 394–cysteine 406, cysteine 426–cysteine 452, cysteine 456–cysteine 476, cysteine 467–cysteine 479, cysteine 481–cysteine 490, cysteine 492–cysteine 519, cysteine 502–cysteine 517, cysteine 511–cysteine 522, cysteine 524–cysteine 537, cysteine 539–cysteine 560, cysteine 544–cysteine 558, cysteine 552–cysteine 563, and cysteine 565–cysteine 574. 2 N-linked (GlcNAc...) asparagine glycosylation sites follow: asparagine 48 and asparagine 97. A VWFA domain is found at 131–371 (YPVDLYYLMD…QLIISAYEEL (241 aa)). Residues aspartate 140, serine 142, and serine 144 each contribute to the Mg(2+) site. Residues serine 144, aspartate 147, aspartate 148, and glutamate 179 each contribute to the Ca(2+) site. Residues asparagine 235, aspartate 237, proline 239, and glutamate 240 each coordinate Ca(2+). Glutamate 240 serves as a coordination point for Mg(2+). Asparagine 260 carries N-linked (GlcNAc...) asparagine glycosylation. Aspartate 271 and lysine 355 together coordinate Ca(2+). An N-linked (GlcNAc...) asparagine glycan is attached at asparagine 387. Asparagine 418 is a glycosylation site (N-linked (GlcNAc...) asparagine). I-EGF domains follow at residues 456 to 491 (CQKEVEVNSSKCSNGNGSFQCGVCACNPGHVGHHCE), 492 to 538 (CGED…PYCQ), 539 to 575 (CDNFSCVRHKGLLCGDNGDCDCGECVCRSGWTGEYCN), and 576 to 615 (CTTSTDPCVSEDGILCSGRGDCVCGKCICTNPGASGPACE). 2 N-linked (GlcNAc...) asparagine glycosylation sites follow: asparagine 463 and asparagine 471. The N-linked (GlcNAc...) asparagine glycan is linked to asparagine 541. N-linked (GlcNAc...) asparagine glycosylation occurs at asparagine 575. Disulfide bonds link cysteine 576–cysteine 599, cysteine 583–cysteine 597, cysteine 591–cysteine 602, cysteine 604–cysteine 614, cysteine 617–cysteine 620, cysteine 624–cysteine 670, cysteine 630–cysteine 649, cysteine 633–cysteine 645, and cysteine 678–cysteine 701. A helical transmembrane segment spans residues 709–729 (MIMLGVSLAILLIGVALLCIW). Positions 730–757 (KLLVSFHDRKEVAKFEAERSKAKWQTGT) are interaction with HAX1. The Cytoplasmic segment spans residues 730-787 (KLLVSFHDRKEVAKFEAERSKAKWQTGTNPLYRGSTSTFKNVTYKHKEKQKVDLSTDG).

This sequence belongs to the integrin beta chain family. As to quaternary structure, heterodimer of an alpha and a beta subunit. Interacts with FLNB. Interacts with HAX1. ITGAV:ITGB6 interacts with FBN1. ITGAV:ITGB6 interacts with TGFB1.

The protein resides in the cell membrane. The protein localises to the cell junction. Its subcellular location is the focal adhesion. Functionally, integrin alpha-V:beta-6 (ITGAV:ITGB6) is a receptor for fibronectin and cytotactin. It recognizes the sequence R-G-D in its ligands. ITGAV:ITGB6 acts as a receptor for fibrillin-1 (FBN1) and mediates R-G-D-dependent cell adhesion to FBN1. Integrin alpha-V:beta-6 (ITGAV:ITGB6) mediates R-G-D-dependent release of transforming growth factor beta-1 (TGF-beta-1) from regulatory Latency-associated peptide (LAP), thereby playing a key role in TGF-beta-1 activation. The chain is Integrin beta-6 (ITGB6) from Ovis aries (Sheep).